We begin with the raw amino-acid sequence, 360 residues long: Actin-like protein MamK (360 aa).

ATP is bound by residues K22, 33–34 (TS), and D89. Position 156 (E156) interacts with Mg(2+). ATP contacts are provided by residues 177–179 (AGT), 231–235 (KEQFS), and G302.

The protein belongs to the FtsA/MreB family. MamK subfamily. In terms of assembly, forms cytoplasmic filaments. Interacts with MamJ. Forms filaments in the absence of other magnetosome proteins and in E.coli. Filament formation in vitro requires ATP, GTP or a non-hydrolyzable ATP analog.

The protein resides in the cytoplasm. Its subcellular location is the cytoskeleton. The catalysed reaction is ATP + H2O = ADP + phosphate + H(+). With respect to regulation, filament dynamics depend partially on MamJ. Functionally, protein with ATPase activity which forms dynamic cytoplasmic filaments that are involved in sorting, concatenating and/or correctly positioning of magnetosomes in the cell. Not absolutely necessary for assembly of short chains. Filaments grow from the both cell poles towards midcell, and are probably disassembled at the other end of the cell, a process known as treadmilling. Polymerizes in the presence of ATP, GTP or a non-hydrolyzable ATP analog. Required for correct segregation and positioning of magnetosomes following cell division. The chain is Actin-like protein MamK from Magnetospirillum gryphiswaldense (strain DSM 6361 / JCM 21280 / NBRC 15271 / MSR-1).